The following is a 450-amino-acid chain: ATP-dependent protease ATPase subunit HslU (450 aa).

Residues V29, 71 to 76, D261, E328, and R400 contribute to the ATP site; that span reads GVGKTE.

This sequence belongs to the ClpX chaperone family. HslU subfamily. A double ring-shaped homohexamer of HslV is capped on each side by a ring-shaped HslU homohexamer. The assembly of the HslU/HslV complex is dependent on binding of ATP.

The protein localises to the cytoplasm. Its function is as follows. ATPase subunit of a proteasome-like degradation complex; this subunit has chaperone activity. The binding of ATP and its subsequent hydrolysis by HslU are essential for unfolding of protein substrates subsequently hydrolyzed by HslV. HslU recognizes the N-terminal part of its protein substrates and unfolds these before they are guided to HslV for hydrolysis. The protein is ATP-dependent protease ATPase subunit HslU of Rickettsia prowazekii (strain Madrid E).